We begin with the raw amino-acid sequence, 627 residues long: Sphingomyelin phosphodiesterase (627 aa).

Residues 1–44 form the signal peptide; that stretch reads MPHHRASSGQDHLRAGWEQRLERSLPAPRVGLLWMGLGLALVLA. The Saposin B-type domain occupies 83–167; sequence QNLTCPACKV…LLGSSCGHWD (85 aa). N-linked (GlcNAc...) asparagine glycosylation occurs at N84. Cystine bridges form between C87–C163, C90–C155, and C118–C129. Residue N173 is glycosylated (N-linked (GlcNAc...) asparagine). Positions 204 and 206 each coordinate Zn(2+). 2 disulfide bridges follow: C219-C224 and C225-C248. Residues D276 and N316 each coordinate Zn(2+). Residues N333 and N393 are each glycosylated (N-linked (GlcNAc...) asparagine). A disulfide bridge links C383 with C429. Residues H423, H455, and H457 each contribute to the Zn(2+) site. Position 506 is a phosphoserine (S506). An N-linked (GlcNAc...) asparagine glycan is attached at N518. Disulfide bonds link C582–C586 and C592–C605. N-linked (GlcNAc...) asparagine glycosylation occurs at N611.

It belongs to the acid sphingomyelinase family. In terms of assembly, monomer. Interacts with SORT1; the interaction is required for SMPD1 targeting to lysosomes. Zn(2+) serves as cofactor. Proteolytically processed. Mature lysosomal form arises from C-terminal proteolytic processing of pro-sphingomyelin phosphodiesterase. Post-translationally, both lysosomal and secreted forms are glycosylated but they show a differential pattern of glycosylation. In terms of processing, phosphorylated at Ser-506 by PRKCD upon stress stimuli. Phosphorylation is required for secretion. This form is generated following cleavage by CASP7 in the extracellular milieu. It shows increased activity.

The protein localises to the lysosome. The protein resides in the lipid droplet. It is found in the secreted. Its subcellular location is the extracellular space. It catalyses the reaction a sphingomyelin + H2O = phosphocholine + an N-acylsphing-4-enine + H(+). The enzyme catalyses N-(octadecanoyl)-sphing-4-enine-1-phosphocholine + H2O = N-octadecanoylsphing-4-enine + phosphocholine + H(+). The catalysed reaction is a 1,2-diacyl-sn-glycero-3-phosphocholine + H2O = phosphocholine + a 1,2-diacyl-sn-glycerol + H(+). It carries out the reaction 1,2-dihexadecanoyl-sn-glycero-3-phosphocholine + H2O = 1,2-dihexadecanoyl-sn-glycerol + phosphocholine + H(+). Hydrolysis of liposomal sphingomyelin is stimulated by incorporation of diacylglycerol (DAG), ceramide and free fatty acids into the liposomal membranes. Phosphatidylcholine hydrolysis is inhibited by incorporation of cholesterol, ceramide, DAG, monoacylglycerol and fatty acids. Converts sphingomyelin to ceramide. Exists as two enzymatic forms that arise from alternative trafficking of a single protein precursor, one that is targeted to the endolysosomal compartment, whereas the other is released extracellularly. However, in response to various forms of stress, lysosomal exocytosis may represent a major source of the secretory form. Its function is as follows. In the lysosomes, converts sphingomyelin to ceramide. Plays an important role in the export of cholesterol from the intraendolysosomal membranes. Also has phospholipase C activities toward 1,2-diacylglycerolphosphocholine and 1,2-diacylglycerolphosphoglycerol. Modulates stress-induced apoptosis through the production of ceramide. Functionally, when secreted, modulates cell signaling with its ability to reorganize the plasma membrane by converting sphingomyelin to ceramide. Secreted form is increased in response to stress and inflammatory mediators such as IL1B, IFNG or TNF as well as upon infection with bacteria and viruses. Produces the release of ceramide in the outer leaflet of the plasma membrane playing a central role in host defense. Ceramide reorganizes these rafts into larger signaling platforms that are required to internalize P.aeruginosa, induce apoptosis and regulate the cytokine response in infected cells. In wounded cells, the lysosomal form is released extracellularly in the presence of Ca(2+) and promotes endocytosis and plasma membrane repair. In terms of biological role, this form is generated following cleavage by CASP7 in the extracellular milieu in response to bacterial infection. It shows increased ability to convert sphingomyelin to ceramide and promotes plasma membrane repair. Plasma membrane repair by ceramide counteracts the action of gasdermin-D (GSDMD) perforin (PRF1) pores that are formed in response to bacterial infection. (Microbial infection) Secretion is activated by bacteria such as P.aeruginosa, this activation results in the release of ceramide in the outer leaflet of the plasma membrane which facilitates the infection. This is Sphingomyelin phosphodiesterase from Mus musculus (Mouse).